Reading from the N-terminus, the 205-residue chain is Thiamine-phosphate synthase (205 aa).

4-amino-2-methyl-5-(diphosphooxymethyl)pyrimidine is bound by residues 35–39 (QYRDK) and asparagine 67. 2 residues coordinate Mg(2+): aspartate 68 and aspartate 86. Position 105 (threonine 105) interacts with 4-amino-2-methyl-5-(diphosphooxymethyl)pyrimidine. 132–134 (SLT) lines the 2-[(2R,5Z)-2-carboxy-4-methylthiazol-5(2H)-ylidene]ethyl phosphate pocket. Lysine 135 lines the 4-amino-2-methyl-5-(diphosphooxymethyl)pyrimidine pocket. 2-[(2R,5Z)-2-carboxy-4-methylthiazol-5(2H)-ylidene]ethyl phosphate is bound at residue glycine 162.

Belongs to the thiamine-phosphate synthase family. It depends on Mg(2+) as a cofactor.

The enzyme catalyses 2-[(2R,5Z)-2-carboxy-4-methylthiazol-5(2H)-ylidene]ethyl phosphate + 4-amino-2-methyl-5-(diphosphooxymethyl)pyrimidine + 2 H(+) = thiamine phosphate + CO2 + diphosphate. It catalyses the reaction 2-(2-carboxy-4-methylthiazol-5-yl)ethyl phosphate + 4-amino-2-methyl-5-(diphosphooxymethyl)pyrimidine + 2 H(+) = thiamine phosphate + CO2 + diphosphate. The catalysed reaction is 4-methyl-5-(2-phosphooxyethyl)-thiazole + 4-amino-2-methyl-5-(diphosphooxymethyl)pyrimidine + H(+) = thiamine phosphate + diphosphate. The protein operates within cofactor biosynthesis; thiamine diphosphate biosynthesis; thiamine phosphate from 4-amino-2-methyl-5-diphosphomethylpyrimidine and 4-methyl-5-(2-phosphoethyl)-thiazole: step 1/1. In terms of biological role, condenses 4-methyl-5-(beta-hydroxyethyl)thiazole monophosphate (THZ-P) and 2-methyl-4-amino-5-hydroxymethyl pyrimidine pyrophosphate (HMP-PP) to form thiamine monophosphate (TMP). In Pseudomonas savastanoi pv. phaseolicola (strain 1448A / Race 6) (Pseudomonas syringae pv. phaseolicola (strain 1448A / Race 6)), this protein is Thiamine-phosphate synthase.